The sequence spans 320 residues: ATP-dependent 6-phosphofructokinase (320 aa).

Gly12 contributes to the ATP binding site. Residues 22 to 26 (RSVVR) and 55 to 60 (RYSVSD) each bind ADP. ATP is bound by residues 73–74 (RF) and 103–106 (GDGS). Residue Asp104 participates in Mg(2+) binding. 126–128 (TID) serves as a coordination point for substrate. Residue Asp128 is the Proton acceptor of the active site. Arg155 provides a ligand contact to ADP. Residues Arg163 and 170–172 (MGR) contribute to the substrate site. ADP-binding positions include 186 to 188 (GCE) and 214 to 216 (KKH). Substrate contacts are provided by residues Glu223, Arg244, and 250 to 253 (HIQR).

It belongs to the phosphofructokinase type A (PFKA) family. ATP-dependent PFK group I subfamily. Prokaryotic clade 'B1' sub-subfamily. Homotetramer. Requires Mg(2+) as cofactor.

It is found in the cytoplasm. It catalyses the reaction beta-D-fructose 6-phosphate + ATP = beta-D-fructose 1,6-bisphosphate + ADP + H(+). It participates in carbohydrate degradation; glycolysis; D-glyceraldehyde 3-phosphate and glycerone phosphate from D-glucose: step 3/4. Its activity is regulated as follows. Allosterically activated by ADP and other diphosphonucleosides, and allosterically inhibited by phosphoenolpyruvate. In terms of biological role, catalyzes the phosphorylation of D-fructose 6-phosphate to fructose 1,6-bisphosphate by ATP, the first committing step of glycolysis. The polypeptide is ATP-dependent 6-phosphofructokinase (Baumannia cicadellinicola subsp. Homalodisca coagulata).